Reading from the N-terminus, the 447-residue chain is GA-binding protein subunit beta-2 (447 aa).

5 ANK repeats span residues 5-34, 37-66, 70-99, 103-132, and 136-166; these read DLGK…PFTT, LGTS…SRDA, VDRT…DVNA, LKMT…DVHA, and FDKS…QVNA. Ser253 bears the Phosphoserine mark. Positions 345–395 form a coiled coil; the sequence is EESKEGTERELLQQRLQEANRRAQEYRHQLLKKEQEAEQYRLRLEAMARQQ. Positions 418-447 are disordered; the sequence is REMEERETEVTGAVGTAEPHTGVSMETVST.

Heterotetramer of two alpha and two beta subunits. The C-terminal is necessary for the formation of a heterotetrameric GABP-alpha-2/beta-2 complex, and also facilitates homotypic dimerization. Interacts with ADGRB2.

It localises to the nucleus. May function as transcription factor capable of interacting with purine rich repeats (GA repeats). This Bos taurus (Bovine) protein is GA-binding protein subunit beta-2 (GABPB2).